Consider the following 358-residue polypeptide: GDSL esterase/lipase At2g30220 (358 aa).

The signal sequence occupies residues 1–22; it reads MYISKTIVFGLFVATLLVSCNA. A glycan (N-linked (GlcNAc...) asparagine) is linked at Asn-25. The active-site Nucleophile is Ser-40. Asn-102 and Asn-324 each carry an N-linked (GlcNAc...) asparagine glycan. Catalysis depends on residues Asp-332 and His-335.

The protein belongs to the 'GDSL' lipolytic enzyme family.

Its subcellular location is the secreted. This chain is GDSL esterase/lipase At2g30220, found in Arabidopsis thaliana (Mouse-ear cress).